The following is a 213-amino-acid chain: Regulatory protein RecX (213 aa).

The protein belongs to the RecX family.

Its subcellular location is the cytoplasm. Modulates RecA activity. This is Regulatory protein RecX from Clostridium beijerinckii (strain ATCC 51743 / NCIMB 8052) (Clostridium acetobutylicum).